A 787-amino-acid polypeptide reads, in one-letter code: Signal transducer and activator of transcription 5B (787 aa).

Tyr-90 carries the phosphotyrosine modification. The residue at position 128 (Ser-128) is a Phosphoserine. An SH2 domain is found at 589 to 686; the sequence is WNDGAILGFV…EVYSKYYTPV (98 aa). Residue Tyr-682 is modified to Phosphotyrosine. Tyr-699 carries the phosphotyrosine; by HCK, JAK and PTK6 modification.

The protein belongs to the transcription factor STAT family. In terms of assembly, upon activation, forms a homodimer or a heterodimer with a related family member. Binds NR3C1. Interacts with NCOA1. Interacts with NMI. Interacts with SOCS7. Interacts (via SH2 domain) with INSR. Interacts with CPEB3; this inhibits STAT5B-mediated transcriptional activation. Post-translationally, tyrosine phosphorylated in response to signaling via activated KIT, resulting in translocation to the nucleus. Tyrosine phosphorylated in response to signaling via activated FLT3; wild-type FLT3 results in much weaker phosphorylation than constitutively activated mutant FLT3. Alternatively, can be phosphorylated by JAK2. Phosphorylation at Tyr-699 by PTK6 or HCK leads to an increase of its transcriptional activity.

The protein resides in the cytoplasm. The protein localises to the nucleus. Functionally, carries out a dual function: signal transduction and activation of transcription. Mediates cellular responses to the cytokine KITLG/SCF and other growth factors. Binds to the GAS element and activates PRL-induced transcription. Positively regulates hematopoietic/erythroid differentiation. The chain is Signal transducer and activator of transcription 5B (STAT5B) from Bos taurus (Bovine).